The chain runs to 74 residues: Exodeoxyribonuclease 7 small subunit (74 aa).

This sequence belongs to the XseB family. In terms of assembly, heterooligomer composed of large and small subunits.

The protein resides in the cytoplasm. It carries out the reaction Exonucleolytic cleavage in either 5'- to 3'- or 3'- to 5'-direction to yield nucleoside 5'-phosphates.. Bidirectionally degrades single-stranded DNA into large acid-insoluble oligonucleotides, which are then degraded further into small acid-soluble oligonucleotides. This is Exodeoxyribonuclease 7 small subunit from Haemophilus ducreyi (strain 35000HP / ATCC 700724).